A 278-amino-acid chain; its full sequence is MQLLPHDTVEDILERVPVKSLLRFKSACKQWKLTIESQYFQAKQLICSAGGKDLNLVLVSEVPKRYHIYQLFHNSCDGLVCLFDYQTLNNIVYNPATRWHRRFPVSSTNTWRYINPSSPYRINTSSSRGHALYVDGSLYWLTGKKEIKVLALDLHTETFQVISKAPFAEADHRNIITRSLNNRLCLSVSKPLQQMIIWSFNSENKTWEQIYSIVNRSVTQSLPVAILEKNKLLCCPRSNSRQLMIYDIKTKSVDSVSIGTYRCGDSVFCYFESLISIL.

The F-box domain occupies 1 to 43 (MQLLPHDTVEDILERVPVKSLLRFKSACKQWKLTIESQYFQAK).

This is Probable F-box protein At1g14315 from Arabidopsis thaliana (Mouse-ear cress).